The following is a 401-amino-acid chain: Phosphoglycerate kinase (401 aa).

Substrate is bound by residues 21-23 (DLN), Arg-36, 59-62 (HQGR), Arg-116, and Arg-156. Residues Glu-331 and 357–360 (GGDT) contribute to the ATP site.

Belongs to the phosphoglycerate kinase family.

It localises to the cytoplasm. It catalyses the reaction (2R)-3-phosphoglycerate + ATP = (2R)-3-phospho-glyceroyl phosphate + ADP. Its pathway is carbohydrate degradation; glycolysis; pyruvate from D-glyceraldehyde 3-phosphate: step 2/5. The chain is Phosphoglycerate kinase (pgk) from Haloarcula vallismortis (Halobacterium vallismortis).